A 197-amino-acid chain; its full sequence is Amino-terminal enhancer of split (197 aa).

Residues 1 to 15 are compositionally biased toward low complexity; it reads MMFPQSSSRHSGSSH. 2 disordered regions span residues 1-20 and 169-197; these read MMFP…PQQL and LGSQ…DKSD. The interval 166–197 is CCN domain; it reads LSALGSQGHLPKEDKNGHEGDRRPDDDGDKSD. Residues 175 to 197 are compositionally biased toward basic and acidic residues; the sequence is LPKEDKNGHEGDRRPDDDGDKSD.

The protein belongs to the WD repeat Groucho/TLE family. Monomer. Ubiquitinated by XIAP/BIRC4. As to expression, predominantly expressed in brain, testis and ovary. Ubiquitously expressed in the developing embryo. Present in unfertilized and fertilized eggs.

The protein resides in the nucleus. Functionally, may act as a transcriptional corepressor. Has a possible role in the negative regulation of proteins containing WD-40 repeats. May be required for the initiation and maintenance of the differentiated state. In Xenopus laevis (African clawed frog), this protein is Amino-terminal enhancer of split (aes).